Reading from the N-terminus, the 337-residue chain is Mitochondrial glutathione transporter SLC25A40 (337 aa).

Solcar repeat units lie at residues 14–132, 140–224, and 234–328; these read VTPL…LSAF, NETR…LKRW, and PTFM…GKSF. 6 helical membrane-spanning segments follow: residues 20–40, 104–124, 146–166, 200–221, 240–260, and 299–319; these read MIAS…LDVV, LWSG…IYFT, IVAG…LELI, WAPT…YENL, FTSG…FDVV, and GLFT…AIMI.

The protein belongs to the mitochondrial carrier (TC 2.A.29) family.

It is found in the mitochondrion inner membrane. The catalysed reaction is glutathione(in) = glutathione(out). Functionally, probable mitochondrial transporter required for glutathione import into mitochondria. Glutathione, which plays key roles in oxidative metabolism, is produced exclusively in the cytosol and is imported in many organelles. Mitochondrial glutathione is required for the activity and stability of proteins containing iron-sulfur clusters, as well as erythropoiesis. The protein is Mitochondrial glutathione transporter SLC25A40 of Mus musculus (Mouse).